Reading from the N-terminus, the 330-residue chain is G-protein coupled bile acid receptor 1 (330 aa).

At 1 to 19 (MTPNSTGEVPGPIPRGALE) the chain is on the extracellular side. Asn4 is a glycosylation site (N-linked (GlcNAc...) asparagine). The helical transmembrane segment at 20 to 40 (LSLALASLIIAANLLLALGIA) threads the bilayer. The Cytoplasmic portion of the chain corresponds to 41–50 (CDRRLRSPPA). The helical transmembrane segment at 51–71 (GCFFLSLLLAGLLTGLALPTL) threads the bilayer. Topologically, residues 72 to 85 (PGLWRQSHRGYWSC) are extracellular. The cysteines at positions 85 and 155 are disulfide-linked. Residues 86-106 (LLVYLAPNFSFLSLLANLLLV) traverse the membrane as a helical segment. Residues 107–125 (HGERYVAVLRPLQPPGSIR) are Cytoplasmic-facing. The chain crosses the membrane as a helical span at residues 126–146 (LALLLTWTGPLLFASLPALGW). The Extracellular portion of the chain corresponds to 147 to 169 (NHWGPEANCSSQTIFPAPYLYLE). N-linked (GlcNAc...) asparagine glycosylation is present at Asn154. Residues 170–190 (VYGLLLPAVGAAALLSAHVLL) traverse the membrane as a helical segment. Residues 191 to 230 (AAHRQLQDIRRLERAVCRDAPSALARALTWRQARAQAGAT) lie on the Cytoplasmic side of the membrane. The helical transmembrane segment at 231–251 (LLFGLCWGPYVATLFLSVLAY) threads the bilayer. Topologically, residues 252 to 261 (EQRPPLGPGT) are extracellular. A helical membrane pass occupies residues 262-282 (LLSLLSLGSASAAAVPVAMGL). The Cytoplasmic portion of the chain corresponds to 283 to 330 (GDHRYTAPWRAAARRWLRGLRGRGSQASPGPSTAYHTSSQSSVDVDLN). Residues 304–330 (GRGSQASPGPSTAYHTSSQSSVDVDLN) are disordered. Polar residues predominate over residues 307–330 (SQASPGPSTAYHTSSQSSVDVDLN).

The protein belongs to the G-protein coupled receptor 1 family. In terms of tissue distribution, expressed at high level in spleen. Expressed at lower level in thymus, heart, lung, liver, kidney, ileum, blood and adherent alveolar macrophage cells.

It is found in the cell membrane. Its function is as follows. Receptor for bile acid. Bile-acid binding induces its internalization, activation of extracellular signal-regulated kinase and intracellular cAMP production. May be involved in the suppression of macrophage functions by bile acids. Involved in bile acid promoted GLP1R secretion. The polypeptide is G-protein coupled bile acid receptor 1 (GPBAR1) (Oryctolagus cuniculus (Rabbit)).